The following is a 555-amino-acid chain: Protein tyrosine phosphatase-like protein egg-3 (555 aa).

2 consecutive short sequence motifs (D-box) follow at residues arginine 96–leucine 99 and arginine 130–leucine 133. One can recognise a Tyrosine-protein phosphatase domain in the interval phenylalanine 207–tryptophan 514. The RXXL motif; required for cortical localization motif lies at arginine 253–leucine 256. The RXXL motif signature appears at arginine 266–leucine 269. 2 short sequence motifs (RXXL motif; required for cortical localization) span residues arginine 509–leucine 512 and arginine 525–leucine 528.

The protein belongs to the protein-tyrosine phosphatase family. In terms of assembly, part of a complex, consisting of pseudophosphatases egg-3, egg-4, egg-5 and kinase mbk-2; this complex is required for the oocyte-to-zygote transition. Interacts (via tyrosine-protein phosphatase domain) with kinase mbk-2 (via N-terminus); the interaction does not affect mbk-2 kinase activity, is enhanced by mbk-2 tyrosine phosphorylation status and requires prior binding of mbk-2 to egg-4 and egg-5. Interacts with egg-4.

Its subcellular location is the cytoplasm. It is found in the cell cortex. Functionally, probable pseudophosphatase required for the oocyte-to-zygote transition during which it regulates the polarized dispersal of the cortical actin cytoskeleton, the synthesis of the eggshell chitin layer and the formation of the polar bodies after meiosis I and II. Acts as a scaffold to tether kinase mbk-2 and pseudophosphatases egg-4 and egg-5 to the oocyte cortex and thus restricts mbk-2 activity to the cortex during meiosis I. Regulates mbk-2 localization to cytoplasmic foci during meiosis II. Also required for chitin synthase chs-1 localization to the cell cortex of unfertilized oocytes and to cytoplasmic foci in the fertilized embryo. In Caenorhabditis elegans, this protein is Protein tyrosine phosphatase-like protein egg-3.